A 268-amino-acid chain; its full sequence is Orotidine 5'-phosphate decarboxylase (268 aa).

Residues D38, 60-62 (KTH), 92-101 (DRKFADIGNT), Y218, and R236 each bind substrate. Catalysis depends on K94, which acts as the Proton donor.

It belongs to the OMP decarboxylase family.

The enzyme catalyses orotidine 5'-phosphate + H(+) = UMP + CO2. Its pathway is pyrimidine metabolism; UMP biosynthesis via de novo pathway; UMP from orotate: step 2/2. The chain is Orotidine 5'-phosphate decarboxylase (URA3) from Candida parapsilosis (Yeast).